The following is a 353-amino-acid chain: Photosystem II protein D1 (353 aa).

N-acetylthreonine is present on threonine 2. Threonine 2 is modified (phosphothreonine). Transmembrane regions (helical) follow at residues 29–46, 118–133, and 142–156; these read YIGW…TATS, HFLL…EWEL, and WIAV…AATA. Histidine 118 contributes to the chlorophyll a binding site. Tyrosine 126 serves as a coordination point for pheophytin a. The [CaMn4O5] cluster site is built by aspartate 170 and glutamate 189. Residues 197 to 218 traverse the membrane as a helical segment; it reads FHMLGVAGVFGGSLFSAMHGSL. Histidine 198 is a chlorophyll a binding site. A quinone is bound by residues histidine 215 and 264 to 265; that span reads SF. Histidine 215 lines the Fe cation pocket. Histidine 272 is a binding site for Fe cation. The helical transmembrane segment at 274–288 threads the bilayer; it reads FLAAWPVVGIWFTAL. The [CaMn4O5] cluster site is built by histidine 332, glutamate 333, aspartate 342, and alanine 344. A propeptide spanning residues 345-353 is cleaved from the precursor; that stretch reads VVEAPSTNG.

Belongs to the reaction center PufL/M/PsbA/D family. As to quaternary structure, PSII is composed of 1 copy each of membrane proteins PsbA, PsbB, PsbC, PsbD, PsbE, PsbF, PsbH, PsbI, PsbJ, PsbK, PsbL, PsbM, PsbT, PsbX, PsbY, PsbZ, Psb30/Ycf12, at least 3 peripheral proteins of the oxygen-evolving complex and a large number of cofactors. It forms dimeric complexes. The D1/D2 heterodimer binds P680, chlorophylls that are the primary electron donor of PSII, and subsequent electron acceptors. It shares a non-heme iron and each subunit binds pheophytin, quinone, additional chlorophylls, carotenoids and lipids. D1 provides most of the ligands for the Mn4-Ca-O5 cluster of the oxygen-evolving complex (OEC). There is also a Cl(-1) ion associated with D1 and D2, which is required for oxygen evolution. The PSII complex binds additional chlorophylls, carotenoids and specific lipids. serves as cofactor. Tyr-161 forms a radical intermediate that is referred to as redox-active TyrZ, YZ or Y-Z. Post-translationally, C-terminally processed by CTPA; processing is essential to allow assembly of the oxygen-evolving complex and thus photosynthetic growth.

The protein localises to the plastid. It is found in the chloroplast thylakoid membrane. The catalysed reaction is 2 a plastoquinone + 4 hnu + 2 H2O = 2 a plastoquinol + O2. In terms of biological role, photosystem II (PSII) is a light-driven water:plastoquinone oxidoreductase that uses light energy to abstract electrons from H(2)O, generating O(2) and a proton gradient subsequently used for ATP formation. It consists of a core antenna complex that captures photons, and an electron transfer chain that converts photonic excitation into a charge separation. The D1/D2 (PsbA/PsbD) reaction center heterodimer binds P680, the primary electron donor of PSII as well as several subsequent electron acceptors. This chain is Photosystem II protein D1, found in Aethionema grandiflorum (Persian stone-cress).